A 926-amino-acid polypeptide reads, in one-letter code: Armadillo repeat-containing protein 5 (926 aa).

The span at 82–104 (PAPSQAASGSAPSSVASAGSTPG) shows a compositional bias: low complexity. The tract at residues 82 to 111 (PAPSQAASGSAPSSVASAGSTPGHAPAAES) is disordered. ARM repeat units follow at residues 139-179 (GACR…NLAM), 181-221 (PESC…NLAD), 223-263 (PQHR…ELSR), 267-306 (RACA…NLCA), 307-354 (QGLV…LCRE), 355-399 (AINR…DTGA), and 401-440 (GKLQ…EERT). The residue at position 337 (serine 337) is a Phosphoserine. The segment at 472–516 (WSPERCPMPEPSESVSPTPGQTSMSTPRTLRKPGRIPAATPEEPW) is disordered. The segment covering 484 to 499 (ESVSPTPGQTSMSTPR) has biased composition (polar residues). One can recognise a BTB domain in the interval 745–813 (PDLHFVLDSG…LHGCRGCGAA (69 aa)).

In terms of assembly, substrate-recognition component of the BCR(ARMC5) E3 ubiquitin ligase complex, at least composed of CUL3, ARMC5 and RBX1. Post-translationally, ubiquitinated by a BCR (BTB-CUL3-RBX1) E3 ubiquitin ligase complex, leading to its degradation. Deubiquitinated by USP7. In terms of tissue distribution, expression is high in the thymus, stomach, bone marrow and lymphatic tissues (including lymph nodes and intestinal wall). Also expressed in the adrenal gland, skin and in brain structures, with noticeable levels found in the cerebellum.

It is found in the nucleus. Its subcellular location is the chromosome. The protein localises to the cytoplasm. Its pathway is protein modification; protein ubiquitination. Substrate-recognition component of a BCR (BTB-CUL3-RBX1) E3 ubiquitin ligase complex that terminates RNA polymerase II (Pol II) transcription in the promoter-proximal region of genes. The BCR(ARMC5) complex provides a quality checkpoint during transcription elongation by driving premature transcription termination of transcripts that are unfavorably configured for transcriptional elongation: the BCR(ARMC5) complex acts by mediating ubiquitination of Pol II subunit POLR2A phosphorylated at 'Ser-5' of the C-terminal domain (CTD), leading to POLR2A degradation. The BCR(ARMC5) complex acts in parallel of the integrator complex and is specific for RNA Pol II originating from the promoter-proximal zone: it does not ubiquitinate elongation-stalled RNA Pol II. The BCR(ARMC5) complex also acts as a regulator of fatty acid desaturation by mediating ubiquitination and degradation of SCAP-free SREBF1 and SREBF2. Involved in fetal development, T-cell function and adrenal gland growth homeostasis. Plays a role in steroidogenesis, modulates steroidogenic enzymes expression and cortisol production. This is Armadillo repeat-containing protein 5 from Mus musculus (Mouse).